The primary structure comprises 122 residues: Large ribosomal subunit protein uL14 (122 aa).

The protein belongs to the universal ribosomal protein uL14 family. Part of the 50S ribosomal subunit. Forms a cluster with proteins L3 and L19. In the 70S ribosome, L14 and L19 interact and together make contacts with the 16S rRNA in bridges B5 and B8.

Its function is as follows. Binds to 23S rRNA. Forms part of two intersubunit bridges in the 70S ribosome. This is Large ribosomal subunit protein uL14 from Ruegeria pomeroyi (strain ATCC 700808 / DSM 15171 / DSS-3) (Silicibacter pomeroyi).